A 1029-amino-acid polypeptide reads, in one-letter code: mRNA 3'-end-processing protein rna14 (1029 aa).

Disordered regions lie at residues 1-177 (MAEE…PDVS) and 225-251 (GNVQ…PHDR). Residues 21-32 (VDYKAVEEHGAD) are compositionally biased toward basic and acidic residues. Composition is skewed to polar residues over residues 43-79 (KTLQ…NSVQ) and 104-119 (TSTM…QPKT). Over residues 127 to 140 (VEDEDEDDAGDADY) the composition is skewed to acidic residues. A compositionally biased stretch (polar residues) spans 153–175 (TVATNVPQQSVSGNENEASSTPD). Low complexity predominate over residues 229–243 (DSATATPTPDSPSTS). HAT repeat units lie at residues 281–313 (NRFD…MESE), 315–346 (NDLY…YVRR), 357–392 (QARR…FIKS), 406–439 (QKMD…FEMG), 469–509 (ITRD…WEKG), and 521–553 (AFKG…FCFL). Disordered stretches follow at residues 634–664 (TFAK…ESVK), 853–951 (TAVR…GSPA), and 996–1023 (IPLP…SPSL). A compositionally biased stretch (basic and acidic residues) spans 894–908 (SPKRPLEDFDDDYNR). Polar residues-rich tracts occupy residues 932–949 (RSQL…SQGS) and 1006–1023 (GTTQ…SPSL).

It is found in the nucleus. The protein localises to the cytoplasm. In terms of biological role, component of the cleavage factor IA (CFIA) complex, which is involved in the endonucleolytic cleavage during polyadenylation-dependent pre-mRNA 3'-end formation. This Aspergillus fumigatus (strain ATCC MYA-4609 / CBS 101355 / FGSC A1100 / Af293) (Neosartorya fumigata) protein is mRNA 3'-end-processing protein rna14 (rna14).